The primary structure comprises 202 residues: Recombination protein RecR (202 aa).

The C4-type zinc-finger motif lies at Cys-61 to Cys-76. Positions Ser-84 to Pro-179 constitute a Toprim domain.

This sequence belongs to the RecR family.

Its function is as follows. May play a role in DNA repair. It seems to be involved in an RecBC-independent recombinational process of DNA repair. It may act with RecF and RecO. In Bordetella avium (strain 197N), this protein is Recombination protein RecR.